Reading from the N-terminus, the 899-residue chain is Auxin response factor 25 (899 aa).

The tract at residues 1 to 20 is disordered; sequence MKLSPPASADMPQALPENDG. Residues 132–234 constitute a DNA-binding region (TF-B3); it reads FCKTLTASDT…QLLLGIRRAN (103 aa). Residues 546–564 are compositionally biased toward low complexity; the sequence is RQHVLQEQSSQEMQQQLPS. A disordered region spans residues 546–586; the sequence is RQHVLQEQSSQEMQQQLPSSDHHVADVASESGSAPQAQSSL. Residues 575–586 are compositionally biased toward polar residues; sequence ESGSAPQAQSSL. In terms of domain architecture, PB1 spans 766–850; the sequence is ATFVKVYKSG…WCIKILSPQE (85 aa).

The protein belongs to the ARF family. As to quaternary structure, homodimers and heterodimers. In terms of tissue distribution, expressed in roots, culms, leaves and young panicles.

It is found in the nucleus. Its function is as follows. Auxin response factors (ARFs) are transcriptional factors that bind specifically to the DNA sequence 5'-TGTCTC-3' found in the auxin-responsive promoter elements (AuxREs). This Oryza sativa subsp. japonica (Rice) protein is Auxin response factor 25 (ARF25).